A 490-amino-acid polypeptide reads, in one-letter code: MQFSTFQTNLDNWQGASLIFGVLEEEIASQLENIKFVVDPKLLLKKVTQKKFKGEKGKTLSFEFLDQKLETLIIVGLGKSKDLNKSDIENSIGNLVRKTVDKNAKISILLPWELINSQLEITKLAESARLSAYKDNRFNKKKDEKKVLKEIEFLNLKQFENISFEETAQICEGVELARKLVAAPPNSLTPQEMSLQASKIAKDHGLEVKILEAKDCEDLEMGAYLAVAKGSDLDPKFIHLTLKSEGPIKEKIALVGKGLTFDSGGYNLKVGASQIEMMKYDMGGSAAVLGAAKALGAIKPKGLEIHFIVAACENMINGSAVHPGDVVKASNGKTIEINNTDAEGRLTLADALTYASNLNPDSIIDLATLTGAIVVALGNDVAGFWSNNDDLANDLKAASAQSGEKLWQMPLQKSYKEGLKSHIADMKNTGPRAGGSITAALFLEEFFDSEIKWAHIDIAGTCWTDKNKGINPSGATGFGVKTLVQWIKNK.

2 residues coordinate Mn(2+): K257 and D262. The active site involves K269. Residues D281, D341, and E343 each contribute to the Mn(2+) site. Residue R345 is part of the active site.

This sequence belongs to the peptidase M17 family. Mn(2+) serves as cofactor.

Its subcellular location is the cytoplasm. It carries out the reaction Release of an N-terminal amino acid, Xaa-|-Yaa-, in which Xaa is preferably Leu, but may be other amino acids including Pro although not Arg or Lys, and Yaa may be Pro. Amino acid amides and methyl esters are also readily hydrolyzed, but rates on arylamides are exceedingly low.. The enzyme catalyses Release of an N-terminal amino acid, preferentially leucine, but not glutamic or aspartic acids.. Its function is as follows. Presumably involved in the processing and regular turnover of intracellular proteins. Catalyzes the removal of unsubstituted N-terminal amino acids from various peptides. This is Probable cytosol aminopeptidase from Prochlorococcus marinus (strain AS9601).